The following is a 147-amino-acid chain: Sentan (147 aa).

The segment at 1–36 is disordered; sequence MGGCMHSTWDHALHSRGEPRPSEAPASISAPSKMPK. Residues 8-21 are compositionally biased toward basic and acidic residues; sequence TWDHALHSRGEPRP. Residues 23–32 show a composition bias toward low complexity; it reads EAPASISAPS.

The protein belongs to the S-100 family. As to expression, expressed exclusively in ciliated epithelial cells. Detected in ciliated epithelium of trachea and oviduct (at protein level).

It localises to the cell projection. The protein localises to the cilium. May be a component of the linker structure that bridges the ciliary membrane and peripheral singlet microtubules. This is Sentan (Sntn) from Mus musculus (Mouse).